A 189-amino-acid polypeptide reads, in one-letter code: Segregation and condensation protein B (189 aa).

It belongs to the ScpB family. As to quaternary structure, homodimer. Homodimerization may be required to stabilize the binding of ScpA to the Smc head domains. Component of a cohesin-like complex composed of ScpA, ScpB and the Smc homodimer, in which ScpA and ScpB bind to the head domain of Smc. The presence of the three proteins is required for the association of the complex with DNA.

The protein resides in the cytoplasm. In terms of biological role, participates in chromosomal partition during cell division. May act via the formation of a condensin-like complex containing Smc and ScpA that pull DNA away from mid-cell into both cell halves. In Lachnoclostridium phytofermentans (strain ATCC 700394 / DSM 18823 / ISDg) (Clostridium phytofermentans), this protein is Segregation and condensation protein B.